The following is a 445-amino-acid chain: Guanosine nucleotide diphosphate dissociation inhibitor At5g09550 (445 aa).

The protein belongs to the Rab GDI family.

Its function is as follows. Regulates the GDP/GTP exchange reaction of most RAB proteins by inhibiting the dissociation of GDP from them, and the subsequent binding of GTP. The polypeptide is Guanosine nucleotide diphosphate dissociation inhibitor At5g09550 (Arabidopsis thaliana (Mouse-ear cress)).